The following is an 84-amino-acid chain: UPF0248 protein Pisl_1919 (84 aa).

It belongs to the UPF0248 family.

In Pyrobaculum islandicum (strain DSM 4184 / JCM 9189 / GEO3), this protein is UPF0248 protein Pisl_1919.